Here is a 344-residue protein sequence, read N- to C-terminus: Inositol 2-dehydrogenase/D-chiro-inositol 3-dehydrogenase (344 aa).

Belongs to the Gfo/Idh/MocA family. Homotetramer.

The catalysed reaction is myo-inositol + NAD(+) = scyllo-inosose + NADH + H(+). It carries out the reaction 1D-chiro-inositol + NAD(+) = scyllo-inosine + NADH + H(+). Its pathway is polyol metabolism; myo-inositol degradation into acetyl-CoA; acetyl-CoA from myo-inositol: step 1/7. Involved in the oxidation of myo-inositol (MI) and D-chiro-inositol (DCI) to 2-keto-myo-inositol (2KMI or 2-inosose) and 1-keto-D-chiro-inositol (1KDCI), respectively. The chain is Inositol 2-dehydrogenase/D-chiro-inositol 3-dehydrogenase from Bacillus velezensis (strain DSM 23117 / BGSC 10A6 / LMG 26770 / FZB42) (Bacillus amyloliquefaciens subsp. plantarum).